We begin with the raw amino-acid sequence, 292 residues long: CCR4-NOT transcription complex subunit 8 (292 aa).

4 residues coordinate a divalent metal cation: Asp-40, Glu-42, Asp-161, and Asp-230.

Belongs to the CAF1 family. Component of the CCR4-NOT complex; distinct complexes seem to exist that differ in the participation of probably mutually exclusive catalytic subunits; the complex contains two deadenylase subunits, CNOT6 or CNOT6L, and CNOT7 or CNOT8. In the complex interacts directly with CNOT1. Interacts with BTG1, BTG2 and TOB1. Interacts with BTG4.

The protein resides in the cytoplasm. The protein localises to the nucleus. It carries out the reaction Exonucleolytic cleavage of poly(A) to 5'-AMP.. Has 3'-5' poly(A) exoribonuclease activity for synthetic poly(A) RNA substrate. Its function seems to be partially redundant with that of CNOT7. Catalytic component of the CCR4-NOT complex which is linked to various cellular processes including bulk mRNA degradation, miRNA-mediated repression, translational repression during translational initiation and general transcription regulation. During miRNA-mediated repression the complex also seems to act as translational repressor during translational initiation. Additional complex functions may be a consequence of its influence on mRNA expression. Associates with members of the BTG family such as TOB1 and BTG2 and is required for their anti-proliferative activity. This is CCR4-NOT transcription complex subunit 8 (CNOT8) from Homo sapiens (Human).